We begin with the raw amino-acid sequence, 191 residues long: Protein YceI (191 aa).

The N-terminal stretch at 1 to 22 is a signal peptide; the sequence is MKKSLLGLTFASLMFSAGSAVA.

This sequence belongs to the UPF0312 family. Type 1 subfamily.

The protein localises to the periplasm. The polypeptide is Protein YceI (Escherichia coli O6:H1 (strain CFT073 / ATCC 700928 / UPEC)).